The chain runs to 544 residues: Bacillolysin (544 aa).

The N-terminal stretch at 1-25 (MNKRAMLGAIGLAFGLMAWPFGASA) is a signal peptide. The propeptide at 26–225 (KGKSMVWNEQ…DEAKPGGAQP (200 aa)) is activation peptide. 4 residues coordinate Ca(2+): D285, D287, Q289, and D366. Position 370 (H370) interacts with Zn(2+). The active site involves E371. Residues H374 and E394 each contribute to the Zn(2+) site. Residues E405, N411, D413, E415, E418, Y421, T422, V425, and D428 each coordinate Ca(2+). The active-site Proton donor is H459.

This sequence belongs to the peptidase M4 family. Ca(2+) serves as cofactor. It depends on Zn(2+) as a cofactor.

Its subcellular location is the secreted. The enzyme catalyses Similar, but not identical, to that of thermolysin.. Extracellular zinc metalloprotease. The chain is Bacillolysin (npr) from Bacillus caldolyticus.